The sequence spans 78 residues: Conotoxin 1 (78 aa).

An N-terminal signal peptide occupies residues 1 to 22 (MKLTCMMFVAVLFLTASVFITA). Positions 23–51 (DDSRNGIENLPRMRRHEMKNPKASKLNKR) are excised as a propeptide. Residue glutamine 52 is modified to Pyrrolidone carboxylic acid. 3 disulfides stabilise this stretch: cysteine 53–cysteine 69, cysteine 60–cysteine 73, and cysteine 68–cysteine 77.

It belongs to the conotoxin O1 superfamily. As to expression, expressed by the venom duct.

It localises to the secreted. This is Conotoxin 1 from Conus imperialis (Imperial cone).